A 331-amino-acid chain; its full sequence is Nucleoporin Nup35 (331 aa).

2 disordered regions span residues 1 to 63 (MEPM…HELN) and 79 to 110 (AHTA…GLFD). Composition is skewed to polar residues over residues 8–20 (SPVN…QTQY), 35–56 (HKNT…SPGG), and 84–104 (GANS…TGPP). The RRM Nup35-type domain occupies 187-268 (RLSDFWVTIF…SRCTDRSVID (82 aa)).

The protein belongs to the Nup35 family. In terms of assembly, interacts with Nup154.

It localises to the nucleus. It is found in the nuclear pore complex. In terms of biological role, functions as a component of the nuclear pore complex (NPC). May have a role in the organization of the inner nuclear membrane proteins at the nuclear envelope together with Nup154. This is Nucleoporin Nup35 from Drosophila melanogaster (Fruit fly).